The sequence spans 339 residues: Lipoyl synthase (339 aa).

The segment at 13-35 (RPKLDAPARPRHPEKAHRPDTAI) is disordered. C68, C73, C79, C94, C98, C101, and S307 together coordinate [4Fe-4S] cluster. A Radical SAM core domain is found at 80–296 (WEKRHATFMI…ETTAYAKGFL (217 aa)).

This sequence belongs to the radical SAM superfamily. Lipoyl synthase family. It depends on [4Fe-4S] cluster as a cofactor.

It localises to the cytoplasm. It carries out the reaction [[Fe-S] cluster scaffold protein carrying a second [4Fe-4S](2+) cluster] + N(6)-octanoyl-L-lysyl-[protein] + 2 oxidized [2Fe-2S]-[ferredoxin] + 2 S-adenosyl-L-methionine + 4 H(+) = [[Fe-S] cluster scaffold protein] + N(6)-[(R)-dihydrolipoyl]-L-lysyl-[protein] + 4 Fe(3+) + 2 hydrogen sulfide + 2 5'-deoxyadenosine + 2 L-methionine + 2 reduced [2Fe-2S]-[ferredoxin]. It functions in the pathway protein modification; protein lipoylation via endogenous pathway; protein N(6)-(lipoyl)lysine from octanoyl-[acyl-carrier-protein]: step 2/2. Its function is as follows. Catalyzes the radical-mediated insertion of two sulfur atoms into the C-6 and C-8 positions of the octanoyl moiety bound to the lipoyl domains of lipoate-dependent enzymes, thereby converting the octanoylated domains into lipoylated derivatives. This chain is Lipoyl synthase, found in Methylorubrum extorquens (strain PA1) (Methylobacterium extorquens).